The primary structure comprises 820 residues: DNA mismatch repair protein MutS (820 aa).

618–625 contacts ATP; sequence GPNMAGKS.

It belongs to the DNA mismatch repair MutS family.

In terms of biological role, this protein is involved in the repair of mismatches in DNA. It is possible that it carries out the mismatch recognition step. This protein has a weak ATPase activity. This is DNA mismatch repair protein MutS from Chlamydia trachomatis serovar A (strain ATCC VR-571B / DSM 19440 / HAR-13).